The chain runs to 427 residues: 3-phosphoshikimate 1-carboxyvinyltransferase (427 aa).

The 3-phosphoshikimate site is built by Lys22, Ser23, and Arg27. Lys22 provides a ligand contact to phosphoenolpyruvate. The phosphoenolpyruvate site is built by Gly96 and Arg124. Residues Ser170, Ser171, Gln172, Ser198, Asp314, Asn337, and Lys341 each coordinate 3-phosphoshikimate. Gln172 serves as a coordination point for phosphoenolpyruvate. The Proton acceptor role is filled by Asp314. Residues Arg345, Arg387, and Lys412 each coordinate phosphoenolpyruvate.

The protein belongs to the EPSP synthase family. As to quaternary structure, monomer.

The protein localises to the cytoplasm. It catalyses the reaction 3-phosphoshikimate + phosphoenolpyruvate = 5-O-(1-carboxyvinyl)-3-phosphoshikimate + phosphate. The protein operates within metabolic intermediate biosynthesis; chorismate biosynthesis; chorismate from D-erythrose 4-phosphate and phosphoenolpyruvate: step 6/7. Its function is as follows. Catalyzes the transfer of the enolpyruvyl moiety of phosphoenolpyruvate (PEP) to the 5-hydroxyl of shikimate-3-phosphate (S3P) to produce enolpyruvyl shikimate-3-phosphate and inorganic phosphate. The polypeptide is 3-phosphoshikimate 1-carboxyvinyltransferase (Tolumonas auensis (strain DSM 9187 / NBRC 110442 / TA 4)).